We begin with the raw amino-acid sequence, 709 residues long: MSSSDPKPGPKPGPWPPTPESAAMPPSSWAKKTGFRPKFSGETTATDSSSGQLSLPVRAKQQETQPDLEAGQTRLRPPPPVSAAVTNGETDKDKKEKPPPPPPGSVAVPVKDQPVKRRRDSDGVVGRSNGPDGANGSGDPVRRPGRIEETVEVLPQSMDDDLVARNLHMKYGLRDTPGLVPIGFYGLQHYLSMLGSLILVPLVIVPAMGGSHEEVANVVSTVLFVSGITTLLHTSFGSRLPLIQGPSFVFLAPALAIINSPEFQGLNGNNNFKHIMRELQGAIIIGSAFQAVLGYSGLMSLILRLVNPVVVAPTVAAVGLSFYSYGFPLVGKCLEIGVVQILLVIIFALYLRKISVLSHRIFLIYAVPLSLAITWAAAFLLTETGAYTYKGCDPNVPVSNVVSTHCRKYMTRMKYCRVDTSHALSSAPWFRFPYPLQWGVPLFNWKMAFVMCVVSVIASVDSVGSYHASSLLVASRPPTRGVVSRAIGLEGFTSVLAGLWGTGTGSTTLTENVHTIAVTKMGSRRVVELGACVLVIFSLVGKVGGFLASIPQVMVASLLCFMWAMFTALGLSNLRYSEAGSSRNIIIVGLSLFFSLSVPAYFQQYGISPNSNLSVPSYYQPYIVSSHGPFKSQYKGMNYVMNTLLSMSMVIAFIMAVILDNTVPGSKQERGVYVWSDSETATREPALAKDYELPFRVGRFFRWVKWVGI.

The tract at residues 1-145 (MSSSDPKPGP…GSGDPVRRPG (145 aa)) is disordered. Positions 7–19 (KPGPKPGPWPPTP) are enriched in pro residues. Ser40 is modified (phosphoserine). Polar residues predominate over residues 41–53 (GETTATDSSSGQL). 2 stretches are compositionally biased toward basic and acidic residues: residues 89–98 (ETDKDKKEKP) and 113–122 (QPVKRRRDSD). Helical transmembrane passes span 190 to 210 (YLSM…AMGG), 218 to 238 (VVST…SFGS), 240 to 260 (LPLI…IINS), 283 to 303 (IIIG…SLIL), 308 to 328 (PVVV…YGFP), 329 to 349 (LVGK…IFAL), 361 to 381 (IFLI…AFLL), 438 to 458 (WGVP…SVIA), 530 to 550 (GACV…LASI), 551 to 571 (PQVM…ALGL), 585 to 605 (IIIV…FQQY), and 639 to 659 (YVMN…AVIL).

The protein belongs to the nucleobase:cation symporter-2 (NCS2) (TC 2.A.40) family. Ubiquitous.

The protein localises to the cell membrane. The chain is Nucleobase-ascorbate transporter 12 (NAT12) from Arabidopsis thaliana (Mouse-ear cress).